The chain runs to 456 residues: MLPSQSPAIFTVSRLNQTVRLLLEHEMGQVWISGEISNFTQPASGHWYFTLKDDTAQVRCAMFRNSNRRVTFRPQHGQQVLVRANITLYEPRGDYQIIVESMQPAGEGLLQQKYEQLKAKLQAEGLFDQQYKKPLPSPAHCVGVITSKTGAALHDILHVLKRRDPSLPVIIYPTAVQGDDAPGQIVRAIELANQRNECDVLIVGRGGGSLEDLWSFNDERVARAIFASRIPVVSAVGHETDVTIADFVADLRAPTPSAAAEVVSRNQQELLRQVQSTRQRLEMAMDYYLANRTRRFTQIHHRLQQQHPQLRLARQQTMLERLQKRMSFALENQLKRTGQQQQRLTQRLNQQNPQPKIHRAQTRIQQLEYRLAETLRVQLSATRERFGNAVTHLEAVSPLSTLARGYSVTTATDGNVLKKVKQVKAGEMLTTRLEDGWIESEVKNIQPVKKSRKKVH.

Belongs to the XseA family. In terms of assembly, heterooligomer composed of large and small subunits.

The protein localises to the cytoplasm. It carries out the reaction Exonucleolytic cleavage in either 5'- to 3'- or 3'- to 5'-direction to yield nucleoside 5'-phosphates.. In terms of biological role, bidirectionally degrades single-stranded DNA into large acid-insoluble oligonucleotides, which are then degraded further into small acid-soluble oligonucleotides. The protein is Exodeoxyribonuclease 7 large subunit of Shigella boydii serotype 18 (strain CDC 3083-94 / BS512).